Consider the following 171-residue polypeptide: S-ribosylhomocysteine lyase (171 aa).

Positions 54, 58, and 128 each coordinate Fe cation.

This sequence belongs to the LuxS family. Homodimer. Fe cation serves as cofactor.

It carries out the reaction S-(5-deoxy-D-ribos-5-yl)-L-homocysteine = (S)-4,5-dihydroxypentane-2,3-dione + L-homocysteine. Its function is as follows. Involved in the synthesis of autoinducer 2 (AI-2) which is secreted by bacteria and is used to communicate both the cell density and the metabolic potential of the environment. The regulation of gene expression in response to changes in cell density is called quorum sensing. Catalyzes the transformation of S-ribosylhomocysteine (RHC) to homocysteine (HC) and 4,5-dihydroxy-2,3-pentadione (DPD). The sequence is that of S-ribosylhomocysteine lyase from Edwardsiella ictaluri (strain 93-146).